The primary structure comprises 307 residues: G-protein coupled receptor 35 (307 aa).

At Met1–Asn18 the chain is on the extracellular side. Asn2 and Asn7 each carry an N-linked (GlcNAc...) asparagine glycan. The helical transmembrane segment at Phe19–Leu39 threads the bilayer. The Cytoplasmic portion of the chain corresponds to Trp40–Arg53. Residues Ile54–Leu74 traverse the membrane as a helical segment. The Extracellular portion of the chain corresponds to Tyr75–Gln88. A disulfide bridge links Cys87 with Cys160. Residues Leu89 to Val110 traverse the membrane as a helical segment. Residues Asp111–Arg129 lie on the Cytoplasmic side of the membrane. A helical membrane pass occupies residues Gln130–Trp150. The Extracellular segment spans residues Arg151–Leu176. Residues Leu177–Leu197 form a helical membrane-spanning segment. Over Ser198 to Met217 the chain is Cytoplasmic. Residues Val218–Val238 traverse the membrane as a helical segment. Residues Gln239–Leu257 lie on the Extracellular side of the membrane. The helical transmembrane segment at Ser258–Met278 threads the bilayer. Topologically, residues Ala279–Thr307 are cytoplasmic. A phosphoserine mark is found at Ser286, Ser292, Ser298, and Ser301. A disordered region spans residues Pro288–Thr307.

The protein belongs to the G-protein coupled receptor 1 family. In terms of processing, multiply phosphorylated in clusters of serines and threonines in the C-terminal tail. Phosphorylation of Ser-298 and Ser-301 is mediated by GRK5 and/or GRK6. As to expression, predominantly expressed in immune and gastrointestinal tissues. Strongly GPR35 expressed in colonic macrophages.

The protein resides in the cell membrane. Functionally, G-protein coupled receptor that binds to several ligands including the tryptophan metabolite kynurenic acid (KYNA), lysophosphatidic acid (LPA) or 5-hydroxyindoleacetic acid (5-HIAA) with high affinity, leading to rapid and transient activation of numerous intracellular signaling pathways. Plays a role in neutrophil recruitment to sites of inflammation and bacterial clearance through the major serotonin metabolite 5-HIAA that acts as a physiological ligand. Stimulates lipid metabolism, thermogenic, and anti-inflammatory gene expression in adipose tissue once activated by kynurenic acid. In macrophages, activation by lysophosphatidic acid promotes GPR35-induced signaling with a distinct transcriptional profile characterized by TNF production associated with ERK and NF-kappa-B activation. In turn, induces chemotaxis of macrophages. In Mus musculus (Mouse), this protein is G-protein coupled receptor 35 (Gpr35).